We begin with the raw amino-acid sequence, 387 residues long: 3-ketoacyl-CoA thiolase (387 aa).

The active-site Acyl-thioester intermediate is the Cys-91. Active-site proton acceptor residues include His-343 and Cys-373.

Belongs to the thiolase-like superfamily. Thiolase family. Heterotetramer of two alpha chains (FadB) and two beta chains (FadA).

The protein resides in the cytoplasm. It carries out the reaction an acyl-CoA + acetyl-CoA = a 3-oxoacyl-CoA + CoA. It functions in the pathway lipid metabolism; fatty acid beta-oxidation. Catalyzes the final step of fatty acid oxidation in which acetyl-CoA is released and the CoA ester of a fatty acid two carbons shorter is formed. The chain is 3-ketoacyl-CoA thiolase from Enterobacter sp. (strain 638).